We begin with the raw amino-acid sequence, 66 residues long: Large ribosomal subunit protein uL29 (66 aa).

This sequence belongs to the universal ribosomal protein uL29 family.

This is Large ribosomal subunit protein uL29 from Borrelia hermsii (strain HS1 / DAH).